Here is a 444-residue protein sequence, read N- to C-terminus: Tubulin beta-2 chain (444 aa).

Residues Gln-11, Glu-69, Ser-138, Gly-142, Thr-143, Gly-144, Asn-204, and Asn-226 each contribute to the GTP site. Glu-69 provides a ligand contact to Mg(2+).

This sequence belongs to the tubulin family. As to quaternary structure, dimer of alpha and beta chains. A typical microtubule is a hollow water-filled tube with an outer diameter of 25 nm and an inner diameter of 15 nM. Alpha-beta heterodimers associate head-to-tail to form protofilaments running lengthwise along the microtubule wall with the beta-tubulin subunit facing the microtubule plus end conferring a structural polarity. Microtubules usually have 13 protofilaments but different protofilament numbers can be found in some organisms and specialized cells. Mg(2+) is required as a cofactor.

It is found in the cytoplasm. It localises to the cytoskeleton. In terms of biological role, tubulin is the major constituent of microtubules, a cylinder consisting of laterally associated linear protofilaments composed of alpha- and beta-tubulin heterodimers. Microtubules grow by the addition of GTP-tubulin dimers to the microtubule end, where a stabilizing cap forms. Below the cap, tubulin dimers are in GDP-bound state, owing to GTPase activity of alpha-tubulin. This is Tubulin beta-2 chain (TUBB2) from Zea mays (Maize).